The following is a 483-amino-acid chain: RNA-binding protein Nova-1 (483 aa).

The segment at 1–44 is disordered; that stretch reads MMAAAPIQQNGTHTGVPIDLDPPDSRKRPLEAPPEAGSTKRTNT. Positions 27–43 match the Bipartite nuclear localization signal motif; the sequence is KRPLEAPPEAGSTKRTN. KH domains follow at residues 49-116, 147-213, and 397-464; these read QYFL…HGFI, IKQV…VELI, and KDVV…QYLI. The required for RNA binding stretch occupies residues 395–479; that stretch reads GSKDVVEIAV…YEQGVRAANP (85 aa).

Interacts with PTBP2; the interaction is direct.

It localises to the nucleus. In terms of biological role, functions to regulate alternative splicing in neurons by binding pre-mRNA in a sequence-specific manner to activate exon inclusion or exclusion. It binds specifically to the sequences 5'-YCAY-3' and regulates splicing in only a subset of regulated exons. Binding to an exonic 5'-YCAY-3' cluster changes the protein complexes assembled on pre-mRNA, blocking U1 snRNP binding and exon inclusion, whereas binding to an intronic 5'-YCAY-3' cluster enhances spliceosome assembly and exon inclusion. Binding to 5'-YCAY-3' clusters results in a local and asymmetric action to regulate spliceosome assembly and alternative splicing in neurons. Binding to an exonic 5'-YCAY-3' cluster changed the protein complexes assembled on pre-mRNA, blocking U1 snRNP (small nuclear ribonucleoprotein) binding and exon inclusion, whereas binding to an intronic 5'-YCAY-3' cluster enhanced spliceosome assembly and exon inclusion. With NOVA1, they perform unique biological functions in different brain areas and cell types. Autoregulates its own expression by acting as a splicing repressor. Acts to activate the inclusion of exon E3A in the glycine receptor alpha-2 chain and of exon E9 in gamma-aminobutyric-acid receptor gamma-2 subunit via a distal downstream UCAU-rich intronic splicing enhancer. Acts to regulate a novel glycine receptor alpha-2 chain splice variant (alpha-2N) in developing spinal cord. In Macaca fascicularis (Crab-eating macaque), this protein is RNA-binding protein Nova-1 (NOVA1).